A 263-amino-acid chain; its full sequence is Mediator of RNA polymerase II transcription subunit 6 (263 aa).

Positions 163 to 181 (IHQSTSNPTQGQSSGKSIS) are enriched in polar residues. A disordered region spans residues 163–232 (IHQSTSNPTQ…NGSTSSAESA (70 aa)). Residues 182–202 (ATVGNTGTTATPMTMQTPQTV) show a composition bias toward low complexity.

The protein belongs to the Mediator complex subunit 6 family. In terms of assembly, component of the Mediator complex.

It is found in the nucleus. Its function is as follows. Component of the Mediator complex, a coactivator involved in the regulated transcription of nearly all RNA polymerase II-dependent genes. Mediator functions as a bridge to convey information from gene-specific regulatory proteins to the basal RNA polymerase II transcription machinery. Mediator is recruited to promoters by direct interactions with regulatory proteins and serves as a scaffold for the assembly of a functional preinitiation complex with RNA polymerase II and the general transcription factors. The sequence is that of Mediator of RNA polymerase II transcription subunit 6 (MED6) from Scheffersomyces stipitis (strain ATCC 58785 / CBS 6054 / NBRC 10063 / NRRL Y-11545) (Yeast).